The sequence spans 250 residues: MRVDLNCDLGEAFGNYSFGGDHQIIPLITSANVACGFHAGDENVMNETVKLAKAHNVAVGAHPGLPDLKGFGRRNIDISNDEIYNLMIYQLGALQGFCRIHQLKINHVKPHGALYQMGAKDREIANVIAQAVYDFDPSLVLVGLANSYLISEAKNVGLITASEVFADRRYEDDGQLVSRKESDAVITDTDEALKQVLKMVKENKVISKNNKEVTLQADTICVHGDGEHALLFVSKIREILMKEGIDIQSL.

It belongs to the LamB/PxpA family. In terms of assembly, forms a complex composed of PxpA, PxpB and PxpC.

It catalyses the reaction 5-oxo-L-proline + ATP + 2 H2O = L-glutamate + ADP + phosphate + H(+). Functionally, catalyzes the cleavage of 5-oxoproline to form L-glutamate coupled to the hydrolysis of ATP to ADP and inorganic phosphate. The polypeptide is 5-oxoprolinase subunit A (Staphylococcus aureus (strain Mu3 / ATCC 700698)).